Here is a 161-residue protein sequence, read N- to C-terminus: Allophycocyanin alpha chain (161 aa).

Asparagine 71 is modified (N4-methylasparagine). Cysteine 81 is a (2R,3E)-phycocyanobilin binding site.

The protein belongs to the phycobiliprotein family. In terms of assembly, heterodimer of an alpha and a beta chain. Contains one covalently linked phycocyanobilin chromophore.

The protein resides in the cellular thylakoid membrane. Its function is as follows. Light-harvesting photosynthetic bile pigment-protein from the phycobiliprotein complex. Allophycocyanin has a maximum absorption at approximately 650 nanometers. This is Allophycocyanin alpha chain (apcA) from Thermosynechococcus vestitus (strain NIES-2133 / IAM M-273 / BP-1).